The chain runs to 93 residues: Pyrimidine/purine nucleoside phosphorylase (93 aa).

It belongs to the nucleoside phosphorylase PpnP family.

The enzyme catalyses a purine D-ribonucleoside + phosphate = a purine nucleobase + alpha-D-ribose 1-phosphate. It catalyses the reaction adenosine + phosphate = alpha-D-ribose 1-phosphate + adenine. It carries out the reaction cytidine + phosphate = cytosine + alpha-D-ribose 1-phosphate. The catalysed reaction is guanosine + phosphate = alpha-D-ribose 1-phosphate + guanine. The enzyme catalyses inosine + phosphate = alpha-D-ribose 1-phosphate + hypoxanthine. It catalyses the reaction thymidine + phosphate = 2-deoxy-alpha-D-ribose 1-phosphate + thymine. It carries out the reaction uridine + phosphate = alpha-D-ribose 1-phosphate + uracil. The catalysed reaction is xanthosine + phosphate = alpha-D-ribose 1-phosphate + xanthine. Catalyzes the phosphorolysis of diverse nucleosides, yielding D-ribose 1-phosphate and the respective free bases. Can use uridine, adenosine, guanosine, cytidine, thymidine, inosine and xanthosine as substrates. Also catalyzes the reverse reactions. The chain is Pyrimidine/purine nucleoside phosphorylase from Cellvibrio japonicus (strain Ueda107) (Pseudomonas fluorescens subsp. cellulosa).